The primary structure comprises 127 residues: Biogenesis of lysosome-related organelles complex 1 subunit BLS1 (127 aa).

Residues 103 to 127 (KNSHNTNHGGCNKTKNSSKDKLLDK) are disordered. The span at 105–117 (SHNTNHGGCNKTK) shows a compositional bias: polar residues.

The protein belongs to the BLOC1S1 family. As to quaternary structure, component of the biogenesis of lysosome-related organelles complex-1 (BLOC-1).

The protein localises to the endosome. Its function is as follows. Component of the biogenesis of lysosome-related organelles complex-1 (BLOC-1), a complex involved in endosomal cargo sorting. The protein is Biogenesis of lysosome-related organelles complex 1 subunit BLS1 (BLS1) of Vanderwaltozyma polyspora (strain ATCC 22028 / DSM 70294 / BCRC 21397 / CBS 2163 / NBRC 10782 / NRRL Y-8283 / UCD 57-17) (Kluyveromyces polysporus).